A 413-amino-acid polypeptide reads, in one-letter code: Corticotropin-releasing factor receptor 2 (413 aa).

A signal peptide (not cleaved) is located at residues 1-22 (MDSTIFEIIIDEFDANCSLLDA). Topologically, residues 1-110 (MDSTIFEIII…CVPILDNKRK (110 aa)) are extracellular. N-linked (GlcNAc...) asparagine glycosylation is present at N16. Disulfide bonds link C17-C53, C43-C86, and C67-C101. N-linked (GlcNAc...) asparagine glycans are attached at residues N77, N89, and N97. The chain crosses the membrane as a helical span at residues 111-141 (YALHYKIALIINYLGHCISILALVIAFLLFL). Residues 142–148 (CLRSIRC) are Cytoplasmic-facing. Residues 149–173 (LRNIIHWNLITTFILRNIMWFLLQM) traverse the membrane as a helical segment. The Extracellular segment spans residues 174–187 (IDHNIHESNEVWCR). Residues C186 and C256 are joined by a disulfide bond. Residues 188–216 (CITTIYNYFVVTNFFWMFVEGCYLHTAIV) traverse the membrane as a helical segment. The Cytoplasmic segment spans residues 217–223 (MTYSTDK). A helical transmembrane segment spans residues 224–251 (LRKWVFLFIGWCIPSPIIVTWAICKLFY). Residues 252-267 (ENEQCWIGKEPGKYID) lie on the Extracellular side of the membrane. The chain crosses the membrane as a helical span at residues 268 to 293 (YIYQGRVILVLLINFVFLFNIVRILM). Over 294 to 304 (TKLRASTTSET) the chain is Cytoplasmic. A helical membrane pass occupies residues 305 to 329 (IQYRKAVKATLVLLPLLGITYMLFF). Over 330–336 (VNPGEDD) the chain is Extracellular. A helical transmembrane segment spans residues 337-366 (VSQIVFIYFNSFLQSFQGFFVSVFYCFLNG). At 367-413 (EVRSAARKRWHRWQDHHSLRVRVARAMSIPTSPTRISFHSIKQTAAV) the chain is on the cytoplasmic side.

The protein belongs to the G-protein coupled receptor 2 family. An N-glycosylation site within the signal peptide impedes its proper cleavage and function.

The protein resides in the cell membrane. G-protein coupled receptor for CRH (corticotropin-releasing factor), UCN (urocortin), UCN2 and UCN3. Has high affinity for UCN. Ligand binding causes a conformation change that triggers signaling via guanine nucleotide-binding proteins (G proteins) and down-stream effectors, such as adenylate cyclase. Promotes the activation of adenylate cyclase, leading to increased intracellular cAMP levels. In Xenopus laevis (African clawed frog), this protein is Corticotropin-releasing factor receptor 2 (crhr2).